Reading from the N-terminus, the 723-residue chain is Enolase-phosphatase E1 (723 aa).

Substrate-binding positions include 126–127 (SS) and Lys-160. The tract at residues 239–723 (GAGAKRKIDE…TPTPPIEAES (485 aa)) is disordered. 2 stretches are compositionally biased toward basic and acidic residues: residues 262-284 (VKKD…DEPA) and 293-308 (AAKE…KMEV). Positions 311 to 320 (AAAAAAPPAD) are enriched in low complexity. Composition is skewed to basic and acidic residues over residues 322 to 406 (AEEK…VVEE), 419 to 443 (AEEK…KPAE), 468 to 479 (EPAKEKPAEAEA), 487 to 496 (TKAEVVEKPA), 511 to 565 (SADK…KGEE), and 577 to 593 (VEAK…KSDA). 2 stretches are compositionally biased toward low complexity: residues 596–606 (VSTTTTTTSTE) and 636–647 (NGEAEPAAEAVV). Over residues 653 to 666 (GKHEEKGDSDKEND) the composition is skewed to basic and acidic residues.

The protein belongs to the HAD-like hydrolase superfamily. MasA/MtnC family. In terms of assembly, monomer.

The protein resides in the cytoplasm. It is found in the nucleus. The enzyme catalyses 5-methylsulfanyl-2,3-dioxopentyl phosphate + H2O = 1,2-dihydroxy-5-(methylsulfanyl)pent-1-en-3-one + phosphate. Its pathway is amino-acid biosynthesis; L-methionine biosynthesis via salvage pathway; L-methionine from S-methyl-5-thio-alpha-D-ribose 1-phosphate: step 3/6. It participates in amino-acid biosynthesis; L-methionine biosynthesis via salvage pathway; L-methionine from S-methyl-5-thio-alpha-D-ribose 1-phosphate: step 4/6. In terms of biological role, bifunctional enzyme that catalyzes the enolization of 2,3-diketo-5-methylthiopentyl-1-phosphate (DK-MTP-1-P) into the intermediate 2-hydroxy-3-keto-5-methylthiopentenyl-1-phosphate (HK-MTPenyl-1-P), which is then dephosphorylated to form the acireductone 1,2-dihydroxy-3-keto-5-methylthiopentene (DHK-MTPene). This is Enolase-phosphatase E1 from Culex quinquefasciatus (Southern house mosquito).